Here is a 482-residue protein sequence, read N- to C-terminus: tRNA sulfurtransferase (482 aa).

In terms of domain architecture, THUMP spans 61–165 (LAIRDALTRI…DDRLLLIKGR (105 aa)). Residues 183–184 (LI), lysine 265, glycine 287, and glutamine 296 contribute to the ATP site. Cysteines 344 and 456 form a disulfide. The region spanning 404-482 (FGPNDVILDI…GFNNVKVYRP (79 aa)) is the Rhodanese domain. Catalysis depends on cysteine 456, which acts as the Cysteine persulfide intermediate.

It belongs to the ThiI family.

The protein resides in the cytoplasm. The catalysed reaction is [ThiI sulfur-carrier protein]-S-sulfanyl-L-cysteine + a uridine in tRNA + 2 reduced [2Fe-2S]-[ferredoxin] + ATP + H(+) = [ThiI sulfur-carrier protein]-L-cysteine + a 4-thiouridine in tRNA + 2 oxidized [2Fe-2S]-[ferredoxin] + AMP + diphosphate. The enzyme catalyses [ThiS sulfur-carrier protein]-C-terminal Gly-Gly-AMP + S-sulfanyl-L-cysteinyl-[cysteine desulfurase] + AH2 = [ThiS sulfur-carrier protein]-C-terminal-Gly-aminoethanethioate + L-cysteinyl-[cysteine desulfurase] + A + AMP + 2 H(+). The protein operates within cofactor biosynthesis; thiamine diphosphate biosynthesis. In terms of biological role, catalyzes the ATP-dependent transfer of a sulfur to tRNA to produce 4-thiouridine in position 8 of tRNAs, which functions as a near-UV photosensor. Also catalyzes the transfer of sulfur to the sulfur carrier protein ThiS, forming ThiS-thiocarboxylate. This is a step in the synthesis of thiazole, in the thiamine biosynthesis pathway. The sulfur is donated as persulfide by IscS. In Escherichia coli O139:H28 (strain E24377A / ETEC), this protein is tRNA sulfurtransferase.